Reading from the N-terminus, the 418-residue chain is Phosphopentomutase (418 aa).

The Mn(2+) site is built by Asp-10, Asp-297, His-302, Asp-338, His-339, and His-350.

The protein belongs to the phosphopentomutase family. It depends on Mn(2+) as a cofactor.

It is found in the cytoplasm. It catalyses the reaction 2-deoxy-alpha-D-ribose 1-phosphate = 2-deoxy-D-ribose 5-phosphate. The enzyme catalyses alpha-D-ribose 1-phosphate = D-ribose 5-phosphate. Its pathway is carbohydrate degradation; 2-deoxy-D-ribose 1-phosphate degradation; D-glyceraldehyde 3-phosphate and acetaldehyde from 2-deoxy-alpha-D-ribose 1-phosphate: step 1/2. In terms of biological role, isomerase that catalyzes the conversion of deoxy-ribose 1-phosphate (dRib-1-P) and ribose 1-phosphate (Rib-1-P) to deoxy-ribose 5-phosphate (dRib-5-P) and ribose 5-phosphate (Rib-5-P), respectively. In Chromohalobacter salexigens (strain ATCC BAA-138 / DSM 3043 / CIP 106854 / NCIMB 13768 / 1H11), this protein is Phosphopentomutase.